Here is a 188-residue protein sequence, read N- to C-terminus: Ribosomal RNA small subunit methyltransferase G (188 aa).

Residues glycine 69, phenylalanine 74, 119 to 120 (VQ), and arginine 134 contribute to the S-adenosyl-L-methionine site.

Belongs to the methyltransferase superfamily. RNA methyltransferase RsmG family.

It is found in the cytoplasm. It carries out the reaction guanosine(527) in 16S rRNA + S-adenosyl-L-methionine = N(7)-methylguanosine(527) in 16S rRNA + S-adenosyl-L-homocysteine. Functionally, specifically methylates the N7 position of guanine in position 527 of 16S rRNA. The sequence is that of Ribosomal RNA small subunit methyltransferase G from Campylobacter jejuni subsp. jejuni serotype O:23/36 (strain 81-176).